The sequence spans 369 residues: MARKISNKKTQRDLLAREKLFELAEKIYNQFENEVVPSISLPSRTKSNLEYSNESDVWVYGGRESERSAKTVKGAFQLLKTTYATEFLINEHLAQSRGSTLRELYYISEGWEAAKFKEQAESDRLIEDLELLTNLQREYFHMRPEEDGATMFGPIEITEQTNRGERNIHCQKDVGEGGYQIPFNVENIEFKAHDASMIIAIETGGMYARLMENGFDEAYNAILVHLKGQPARSTRRIIKRMNEELGIPVAVFTDGDPWSYRIYASVAYGAIKSAHLSEFMATPAAKFLGLQPSDIVEYELSTDKLTEQDINALRSELSDPRFESDYWKEQIQLQLDIGKKAEQQAFAGKGLNFVTEVYLPNRLKEMGML.

The region spanning 11–149 is the Topo IIA-type catalytic domain; it reads QRDLLAREKL…FHMRPEEDGA (139 aa). Catalysis depends on Y106, which acts as the O-(5'-phospho-DNA)-tyrosine intermediate. Mg(2+) contacts are provided by E202 and D254.

This sequence belongs to the TOP6A family. As to quaternary structure, homodimer. Heterotetramer of two Top6A and two Top6B chains. It depends on Mg(2+) as a cofactor.

It catalyses the reaction ATP-dependent breakage, passage and rejoining of double-stranded DNA.. Its function is as follows. Relaxes both positive and negative superturns and exhibits a strong decatenase activity. This is Type 2 DNA topoisomerase 6 subunit A from Methanosarcina barkeri (strain Fusaro / DSM 804).